Here is a 20-residue protein sequence, read N- to C-terminus: GMP synthase [glutamine-hydrolyzing] (20 aa).

In terms of domain architecture, GMPS ATP-PPase spans 1-20 (ALGDQLLSVFVDHTLVDEVA).

As to quaternary structure, homodimer.

The enzyme catalyses XMP + L-glutamine + ATP + H2O = GMP + L-glutamate + AMP + diphosphate + 2 H(+). Its pathway is purine metabolism; GMP biosynthesis; GMP from XMP (L-Gln route): step 1/1. Catalyzes the synthesis of GMP from XMP. This chain is GMP synthase [glutamine-hydrolyzing] (guaA), found in Fructilactobacillus sanfranciscensis (Lactobacillus sanfranciscensis).